Reading from the N-terminus, the 466-residue chain is Methylenomycin A resistance protein (466 aa).

14 helical membrane-spanning segments follow: residues 16–36 (ISVL…VTVV), 56–76 (WVVD…GALA), 83–103 (TIYI…AASI), 113–133 (LIQG…LAAS), 146–166 (LWAA…GVLV), 168–188 (LAGW…ALIS), 203–223 (VNII…YALI), 234–254 (VILV…LREI), 276–296 (FIGF…SLFL), 305–325 (FMAG…NLLF), 337–357 (LMFV…VLIS), 367–387 (VLMS…TTVI), 409–429 (IGAL…ATWY), and 434–454 (FAFL…WLFL).

It belongs to the major facilitator superfamily. EmrB family.

It is found in the cell membrane. Resistance to the epoxide antibiotic methylenomycin. The sequence is that of Methylenomycin A resistance protein (mmr) from Bacillus subtilis (strain 168).